A 377-amino-acid chain; its full sequence is Actin-related protein T2 (377 aa).

The protein belongs to the actin family.

It localises to the cytoplasm. The protein resides in the cytoskeleton. In Bos taurus (Bovine), this protein is Actin-related protein T2 (ACTRT2).